The primary structure comprises 243 residues: Venom nerve growth factor 1 (243 aa).

A signal peptide spans 1-18 (MSMLCYTLIIAFLIGIWA). A propeptide spanning residues 19 to 125 (VPKSEDNAPL…ALNRNIRAKR (107 aa)) is cleaved from the precursor. 3 disulfides stabilise this stretch: Cys139-Cys204, Cys182-Cys232, and Cys192-Cys234. An N-linked (GlcNAc...) asparagine glycan is attached at Asn148.

It belongs to the NGF-beta family. As to quaternary structure, homodimer; non-covalently linked. As to expression, expressed by the venom gland.

The protein localises to the secreted. In terms of biological role, nerve growth factor is important for the development and maintenance of the sympathetic and sensory nervous systems. It stimulates division and differentiation of sympathetic and embryonic sensory neurons as well as basal forebrain cholinergic neurons in the brain. Its relevance in the snake venom is not clear. However, it has been shown to inhibit metalloproteinase-dependent proteolysis of platelet glycoprotein Ib alpha, suggesting a metalloproteinase inhibition to prevent metalloprotease autodigestion and/or protection against prey proteases. Binds a lipid between the two protein chains in the homodimer. The lipid-bound form promotes histamine relase from mouse mast cells, contrary to the lipid-free form. The polypeptide is Venom nerve growth factor 1 (Naja sputatrix (Malayan spitting cobra)).